Consider the following 383-residue polypeptide: NifS-like protein (383 aa).

Pyridoxal 5'-phosphate-binding positions include 58-59 (SE) and 184-186 (SLN).

The protein belongs to the class-V pyridoxal-phosphate-dependent aminotransferase family. NifS/IscS subfamily. Pyridoxal 5'-phosphate serves as cofactor.

The protein localises to the virion. The protein is NifS-like protein of African swine fever virus (isolate Pig/Kenya/KEN-50/1950) (ASFV).